The following is a 378-amino-acid chain: Queuine tRNA-ribosyltransferase (378 aa).

D91 (proton acceptor) is an active-site residue. Residues 91–95 (DSGGF), D145, Q189, and G216 contribute to the substrate site. The interval 247–253 (GVGKPED) is RNA binding. D266 functions as the Nucleophile in the catalytic mechanism. The tract at residues 271 to 275 (TRNAR) is RNA binding; important for wobble base 34 recognition. 4 residues coordinate Zn(2+): C304, C306, C309, and H335.

It belongs to the queuine tRNA-ribosyltransferase family. In terms of assembly, homodimer. Within each dimer, one monomer is responsible for RNA recognition and catalysis, while the other monomer binds to the replacement base PreQ1. The cofactor is Zn(2+).

The catalysed reaction is 7-aminomethyl-7-carbaguanine + guanosine(34) in tRNA = 7-aminomethyl-7-carbaguanosine(34) in tRNA + guanine. Its pathway is tRNA modification; tRNA-queuosine biosynthesis. Functionally, catalyzes the base-exchange of a guanine (G) residue with the queuine precursor 7-aminomethyl-7-deazaguanine (PreQ1) at position 34 (anticodon wobble position) in tRNAs with GU(N) anticodons (tRNA-Asp, -Asn, -His and -Tyr). Catalysis occurs through a double-displacement mechanism. The nucleophile active site attacks the C1' of nucleotide 34 to detach the guanine base from the RNA, forming a covalent enzyme-RNA intermediate. The proton acceptor active site deprotonates the incoming PreQ1, allowing a nucleophilic attack on the C1' of the ribose to form the product. After dissociation, two additional enzymatic reactions on the tRNA convert PreQ1 to queuine (Q), resulting in the hypermodified nucleoside queuosine (7-(((4,5-cis-dihydroxy-2-cyclopenten-1-yl)amino)methyl)-7-deazaguanosine). In Vibrio atlanticus (strain LGP32) (Vibrio splendidus (strain Mel32)), this protein is Queuine tRNA-ribosyltransferase.